The chain runs to 128 residues: Large ribosomal subunit protein bL17 (128 aa).

The protein belongs to the bacterial ribosomal protein bL17 family. As to quaternary structure, part of the 50S ribosomal subunit. Contacts protein L32.

The protein is Large ribosomal subunit protein bL17 of Histophilus somni (strain 129Pt) (Haemophilus somnus).